Reading from the N-terminus, the 337-residue chain is Putative [LysW]-lysine/[LysW]-ornithine hydrolase (337 aa).

Position 67 (His67) interacts with Zn(2+). Asp69 is an active-site residue. Position 91 (Asp91) interacts with Zn(2+). The active-site Proton acceptor is the Glu118. Zn(2+) contacts are provided by Glu119, Glu140, and His298.

Belongs to the peptidase M20A family. LysK subfamily. The cofactor is Zn(2+). It depends on Co(2+) as a cofactor.

The protein localises to the cytoplasm. It carries out the reaction [amino-group carrier protein]-C-terminal-gamma-(L-lysyl)-L-glutamate + H2O = [amino-group carrier protein]-C-terminal-L-glutamate + L-lysine. The catalysed reaction is [amino-group carrier protein]-C-terminal-gamma-(L-ornithyl)-L-glutamate + H2O = [amino-group carrier protein]-C-terminal-L-glutamate + L-ornithine. The protein operates within amino-acid biosynthesis; L-lysine biosynthesis via AAA pathway; L-lysine from L-alpha-aminoadipate (Thermus route): step 5/5. It participates in amino-acid biosynthesis; L-arginine biosynthesis. Its function is as follows. Catalyzes the release of L-lysine from [LysW]-gamma-L-lysine and the release of L-ornithine from [LysW]-L-ornithine. This is Putative [LysW]-lysine/[LysW]-ornithine hydrolase from Pyrococcus abyssi (strain GE5 / Orsay).